Consider the following 1201-residue polypeptide: Vitamin B12-dependent ribonucleotide reductase (1201 aa).

Substrate is bound by residues S153, 198-199 (AC), G230, 482-486 (NPCSE), and 683-687 (PTGTI). A disulfide bond links C199 and C495. Catalysis depends on N482, which acts as the Proton acceptor. Catalysis depends on C484, which acts as the Cysteine radical intermediate. E486 serves as the catalytic Proton acceptor. Basic and acidic residues predominate over residues 1100 to 1118 (DEIGSKRATAESNGQEKET). Residues 1100 to 1120 (DEIGSKRATAESNGQEKETLS) are disordered.

It belongs to the ribonucleoside diphosphate reductase class-2 family. Adenosylcob(III)alamin serves as cofactor.

It catalyses the reaction a 2'-deoxyribonucleoside 5'-diphosphate + [thioredoxin]-disulfide + H2O = a ribonucleoside 5'-diphosphate + [thioredoxin]-dithiol. Its function is as follows. Catalyzes the reduction of ribonucleotides to deoxyribonucleotides. May function to provide a pool of deoxyribonucleotide precursors for DNA repair during oxygen limitation and/or for immediate growth after restoration of oxygen. This chain is Vitamin B12-dependent ribonucleotide reductase (nrdJ), found in Leptospira interrogans serogroup Icterohaemorrhagiae serovar copenhageni (strain Fiocruz L1-130).